Here is a 348-residue protein sequence, read N- to C-terminus: Phospho-2-dehydro-3-deoxyheptonate aldolase, Trp-sensitive (348 aa).

This sequence belongs to the class-I DAHP synthase family.

The enzyme catalyses D-erythrose 4-phosphate + phosphoenolpyruvate + H2O = 7-phospho-2-dehydro-3-deoxy-D-arabino-heptonate + phosphate. It functions in the pathway metabolic intermediate biosynthesis; chorismate biosynthesis; chorismate from D-erythrose 4-phosphate and phosphoenolpyruvate: step 1/7. Stereospecific condensation of phosphoenolpyruvate (PEP) and D-erythrose-4-phosphate (E4P) giving rise to 3-deoxy-D-arabino-heptulosonate-7-phosphate (DAHP). The chain is Phospho-2-dehydro-3-deoxyheptonate aldolase, Trp-sensitive (aroH) from Buchnera aphidicola subsp. Baizongia pistaciae (strain Bp).